A 111-amino-acid chain; its full sequence is DNA-binding protein AF_2068 (111 aa).

The protein belongs to the PDCD5 family.

This is DNA-binding protein AF_2068 from Archaeoglobus fulgidus (strain ATCC 49558 / DSM 4304 / JCM 9628 / NBRC 100126 / VC-16).